The following is a 1258-amino-acid chain: Splicing factor, arginine/serine-rich 19 (1258 aa).

Disordered stretches follow at residues 1–32 (MEEEDESRGKTEESGEDRGDGPPDRDPALSPS), 159–345 (KTVS…PRRR), 370–398 (GGPALPLPPLPPTDPEIEEGEIVQPEEEP), 410–1034 (PRQP…PPPM), 1114–1154 (GSLP…DKYL), and 1223–1258 (FRKHGRKPGDPPGPPRPPKEPGPPDKGGPGLPLPPL). Residues 7–27 (SRGKTEESGEDRGDGPPDRDP) show a composition bias toward basic and acidic residues. Residues 193–207 (SSASSSPSPSPSSSS) are compositionally biased toward low complexity. Over residues 208–223 (PSPPPPPPPPPPPALP) the composition is skewed to pro residues. Residues 228 to 237 (DIYDPFHPTD) show a composition bias toward basic and acidic residues. Position 241 is a phosphoserine (serine 241). A compositionally biased stretch (polar residues) spans 256 to 266 (TGSNPSSSAGT). Acidic residues predominate over residues 269–283 (PEEEEEEEEEEEEEG). Phosphothreonine is present on threonine 329. The span at 374-383 (LPLPPLPPTD) shows a compositional bias: pro residues. Over residues 384–395 (PEIEEGEIVQPE) the composition is skewed to acidic residues. The segment covering 414–426 (PASVATLASVAAP) has biased composition (low complexity). A phosphoserine mark is found at serine 444 and serine 449. Basic residues predominate over residues 480 to 491 (KILTQRRERYRQ). 4 positions are modified to phosphoserine: serine 493, serine 495, serine 512, and serine 520. 2 stretches are compositionally biased toward basic residues: residues 540–555 (TARRRSRSRSRRRSRS) and 562–579 (RGSHRSRSREKRRRRRRS). Residues serine 579 and serine 581 each carry the phosphoserine modification. Residues 594-613 (RERHRGKRREGGKKKKKRSR) are compositionally biased toward basic residues. The segment covering 614–625 (SRAEKRSGDLEK) has biased composition (basic and acidic residues). Threonine 665 carries the post-translational modification Phosphothreonine. Serine 678 and serine 684 each carry phosphoserine. The residue at position 691 (tyrosine 691) is a Phosphotyrosine. Phosphoserine occurs at positions 693 and 697. Composition is skewed to basic and acidic residues over residues 698-711 (ADERGAKGDKDRRR) and 721-743 (SREKASRRKALDGDRGRDRDRSS). 2 stretches are compositionally biased toward low complexity: residues 752-777 (SAPGSGALPKAPPSSGSSSSSSSCSS) and 795-806 (SSTTPAKDSSSS). Lysine 814 is covalently cross-linked (Glycyl lysine isopeptide (Lys-Gly) (interchain with G-Cter in SUMO2)). The segment covering 815-833 (FSRDRESRSPFLKPDERAP) has biased composition (basic and acidic residues). Phosphoserine is present on residues serine 821 and serine 823. Basic residues predominate over residues 845 to 877 (KPKKTKAKAKAGAKKAKGTKGKTKPSKTRKKVR). Residues serine 878, serine 885, serine 912, and serine 914 each carry the phosphoserine modification. Positions 924–937 (STPPPKVAPPPPAL) are enriched in pro residues. Threonine 925 and threonine 938 each carry phosphothreonine. Positions 940–949 (DSQTVDSSCK) are enriched in polar residues. Serine 941 is subject to Phosphoserine. Phosphothreonine is present on threonine 950. Over residues 971–986 (EEEEEEEEEEEEEEEQ) the composition is skewed to acidic residues. Over residues 987 to 1019 (QPATTTATSTAAAAPSTAPSAGSTAGDSGAEDG) the composition is skewed to low complexity. Positions 1133–1258 (PASDKREGSS…GGPGLPLPPL (126 aa)) are necessary for interaction with the CTD domain of POLR2A. Residues 1135-1154 (SDKREGSSSSEGRGDTDKYL) show a composition bias toward basic and acidic residues. Over residues 1246–1258 (PDKGGPGLPLPPL) the composition is skewed to pro residues.

Belongs to the splicing factor SR family. In terms of assembly, interacts with POLR2A.

Its subcellular location is the nucleus. Functionally, may function in pre-mRNA splicing. This chain is Splicing factor, arginine/serine-rich 19 (Scaf1), found in Rattus norvegicus (Rat).